We begin with the raw amino-acid sequence, 677 residues long: Epithelial splicing regulatory protein 1 (677 aa).

3 consecutive RRM domains span residues 225 to 302 (TVVR…KATG), 326 to 406 (VIVR…RSTA), and 445 to 525 (DCVR…QCSA). Phosphoserine is present on Ser-543. Arg-578 is subject to Omega-N-methylarginine.

Belongs to the ESRP family.

It localises to the nucleus. MRNA splicing factor that regulates the formation of epithelial cell-specific isoforms. Specifically regulates the expression of FGFR2-IIIb, an epithelial cell-specific isoform of FGFR2. Also regulates the splicing of CD44, CTNND1, ENAH, 3 transcripts that undergo changes in splicing during the epithelial-to-mesenchymal transition (EMT). Acts by directly binding specific sequences in mRNAs. Binds the GU-rich sequence motifs in the ISE/ISS-3, a cis-element regulatory region present in the mRNA of FGFR2. Regulates splicing and expression of genes involved in inner ear development, auditory hair cell differentiation, and cell fate specification in the cochlear epithelium. The polypeptide is Epithelial splicing regulatory protein 1 (Esrp1) (Rattus norvegicus (Rat)).